Here is a 247-residue protein sequence, read N- to C-terminus: 23S rRNA (guanosine-2'-O-)-methyltransferase RlmB (247 aa).

Positions 197, 217, and 226 each coordinate S-adenosyl-L-methionine.

It belongs to the class IV-like SAM-binding methyltransferase superfamily. RNA methyltransferase TrmH family. RlmB subfamily.

The protein resides in the cytoplasm. It catalyses the reaction guanosine(2251) in 23S rRNA + S-adenosyl-L-methionine = 2'-O-methylguanosine(2251) in 23S rRNA + S-adenosyl-L-homocysteine + H(+). Specifically methylates the ribose of guanosine 2251 in 23S rRNA. This chain is 23S rRNA (guanosine-2'-O-)-methyltransferase RlmB, found in Vibrio cholerae serotype O1 (strain ATCC 39315 / El Tor Inaba N16961).